The chain runs to 91 residues: Small ribosomal subunit protein uS19 (91 aa).

It belongs to the universal ribosomal protein uS19 family.

In terms of biological role, protein S19 forms a complex with S13 that binds strongly to the 16S ribosomal RNA. The sequence is that of Small ribosomal subunit protein uS19 from Prochlorococcus marinus (strain MIT 9303).